The chain runs to 79 residues: Small ribosomal subunit protein bS16 (79 aa).

It belongs to the bacterial ribosomal protein bS16 family.

The sequence is that of Small ribosomal subunit protein bS16 from Solidesulfovibrio magneticus (strain ATCC 700980 / DSM 13731 / RS-1) (Desulfovibrio magneticus).